The primary structure comprises 1020 residues: Calcium-transporting ATPase 1 (1020 aa).

At Met1 the chain carries N-acetylmethionine. Topologically, residues 1–162 (MESYLNENFG…NQFTESPSRG (162 aa)) are stromal. The segment at 21 to 32 (ALQRWRKLCWIV) is interaction with calmodulin. Residue Ser46 is modified to Phosphoserine; by CPK. Residues 163-183 (FWLFVWEALQDTTLMILAACA) traverse the membrane as a helical segment. Residues 184–201 (FVSLIVGILMEGWPIGAH) are Lumenal-facing. Residues 202 to 222 (DGLGIVASILLVVFVTATSDY) form a helical membrane-spanning segment. Over 223 to 350 (RQSLQFKDLD…DDETPLQVKL (128 aa)) the chain is Stromal. Residues 351-370 (NGVATIIGKIGLFFAVITFA) form a helical membrane-spanning segment. Over 371–400 (VLVQGLANQKRLDNSHWIWTADELMAMLEY) the chain is Lumenal. Residues 401–418 (FAVAVTIVVVAVPEGLPL) form a helical membrane-spanning segment. Over 419 to 813 (AVTLSLAFAM…KWGRSVYINI (395 aa)) the chain is Stromal. Asp456 serves as the catalytic 4-aspartylphosphate intermediate. Residues Asp758 and Asp762 each contribute to the Mg(2+) site. The chain crosses the membrane as a helical span at residues 814 to 832 (QKFVQFQLTVNVVALIVNF). Residues 833-843 (LSACLTGNAPL) lie on the Lumenal side of the membrane. Residues 844 to 864 (TAVQLLWVNMIMDTLGALALA) form a helical membrane-spanning segment. Residues 865–884 (TEPPQDDLMKRSPVGRKGNF) are Stromal-facing. The helical transmembrane segment at 885-907 (ISNVMWRNILGQSLYQLVIIWCL) threads the bilayer. The Lumenal portion of the chain corresponds to 908–919 (QTKGKTMFGLDG). Residues 920 to 941 (PDSDLTLNTLIFNIFVFCQVFN) form a helical membrane-spanning segment. The Stromal portion of the chain corresponds to 942 to 959 (EISSREMEKIDVFKGILK). A helical transmembrane segment spans residues 960-981 (NYVFVAVLTCTVVFQVIIIELL). The Lumenal portion of the chain corresponds to 982–991 (GTFADTTPLN). Residues 992-1013 (LGQWLVSIILGFLGMPVAAALK) traverse the membrane as a helical segment. Residues 1014 to 1020 (MIPVGSH) lie on the Stromal side of the membrane.

This sequence belongs to the cation transport ATPase (P-type) (TC 3.A.3) family. Type IIB subfamily. Expressed at higher levels in roots than in leaves.

Its subcellular location is the plastid. It is found in the chloroplast inner membrane. The catalysed reaction is Ca(2+)(in) + ATP + H2O = Ca(2+)(out) + ADP + phosphate + H(+). Its activity is regulated as follows. Activated by calmodulin. Its function is as follows. This magnesium-dependent enzyme catalyzes the hydrolysis of ATP coupled with the translocation of calcium from the cytosol out of the cell or into organelles. This Arabidopsis thaliana (Mouse-ear cress) protein is Calcium-transporting ATPase 1 (ACA1).